A 389-amino-acid polypeptide reads, in one-letter code: Probable nitrate transporter NarT (389 aa).

12 helical membrane-spanning segments follow: residues 14–34, 45–65, 69–89, 97–117, 139–159, 161–181, 211–231, 246–266, 268–288, 294–314, 331–351, and 353–373; these read TLSL…MPFI, ISII…PFGY, IVGA…PIFF, GMLM…SVGV, GNIG…IIGW, TTVR…FIFG, WYFI…NYLV, GVFI…GDKF, AVKV…ILGI, LFTV…GLIF, IVSM…TYVA, and LTGS…IALF.

The protein belongs to the major facilitator superfamily. Nitrate/nitrite porter (TC 2.A.1.8) family.

It localises to the cell membrane. Its function is as follows. Probably required for nitrate uptake under anoxic conditions. Also possibly involved in excretion of nitrite produced by the dissimilatory reduction of nitrate. In Staphylococcus aureus (strain JH9), this protein is Probable nitrate transporter NarT (narT).